The following is a 279-amino-acid chain: Pleckstrin homology domain-containing family F member 1 (279 aa).

The PH domain maps to 35–131 (VLLGEGVLTK…WISHIEECVR (97 aa)). The segment at 152–212 (DKATDICMRC…VCSLCYRELA (61 aa)) adopts an FYVE-type zinc-finger fold. Zn(2+)-binding residues include cysteine 158, cysteine 161, cysteine 175, cysteine 178, cysteine 183, cysteine 186, cysteine 204, and cysteine 207. The interval 220–263 (AREGIGGSPPQLSHLGGTVCGASSGDDDDSDEDREGNGDGDWPT) is disordered. A compositionally biased stretch (acidic residues) spans 244-253 (GDDDDSDEDR).

In terms of tissue distribution, widely expressed.

The protein resides in the nucleus. The protein localises to the cytoplasm. It localises to the perinuclear region. It is found in the lysosome. May induce apoptosis through the lysosomal-mitochondrial pathway. Translocates to the lysosome initiating the permeabilization of lysosomal membrane (LMP) and resulting in the release of CTSD and CTSL to the cytoplasm. Triggers the caspase-independent apoptosis by altering mitochondrial membrane permeabilization (MMP) resulting in the release of PDCD8. This Mus musculus (Mouse) protein is Pleckstrin homology domain-containing family F member 1 (Plekhf1).